The primary structure comprises 520 residues: Hydroxymethylglutaryl-CoA synthase, cytoplasmic (520 aa).

The residue at position 4 (Ser4) is a Phosphoserine. Positions 43 and 44 each coordinate (3S)-3-hydroxy-3-methylglutaryl-CoA. 44 to 46 is a CoA binding site; it reads AGK. Lys46 carries the N6-acetyllysine modification. Catalysis depends on Glu95, which acts as the Proton donor/acceptor. (3S)-3-hydroxy-3-methylglutaryl-CoA contacts are provided by Cys129, Asn167, Thr171, Ser221, and His264. Cys129 serves as the catalytic Acyl-thioester intermediate. Asn167 is a binding site for CoA. CoA is bound at residue Ser221. Catalysis depends on His264, which acts as the Proton donor/acceptor. Lys269 and Lys273 together coordinate CoA. Residues Lys273, Asn343, and Ser377 each coordinate (3S)-3-hydroxy-3-methylglutaryl-CoA. Lys273 carries the N6-acetyllysine modification. Positions 486 to 520 are disordered; the sequence is SNTATEHIPSPAKKVPRLPATAAESESAVISNGEH. Residues Ser495 and Ser516 each carry the phosphoserine modification.

This sequence belongs to the thiolase-like superfamily. HMG-CoA synthase family. As to quaternary structure, homodimer.

The protein resides in the cytoplasm. It catalyses the reaction acetoacetyl-CoA + acetyl-CoA + H2O = (3S)-3-hydroxy-3-methylglutaryl-CoA + CoA + H(+). The protein operates within metabolic intermediate biosynthesis; (R)-mevalonate biosynthesis; (R)-mevalonate from acetyl-CoA: step 2/3. Functionally, this enzyme condenses acetyl-CoA with acetoacetyl-CoA to form HMG-CoA, which is converted by HMG-CoA reductase (HMGCR) into mevalonate, a precursor for cholesterol synthesis. This is Hydroxymethylglutaryl-CoA synthase, cytoplasmic from Cricetulus griseus (Chinese hamster).